A 117-amino-acid polypeptide reads, in one-letter code: Protein YchN (117 aa).

It to M.jannaschii MJ0989. As to quaternary structure, homohexamer. The hexamer is formed by a dimer of trimers.

This Escherichia coli O157:H7 protein is Protein YchN (ychN).